The sequence spans 115 residues: Regulator of ribonuclease activity B (115 aa).

The protein belongs to the RraB family. In terms of assembly, interacts with the C-terminal region of Rne.

Its subcellular location is the cytoplasm. Functionally, globally modulates RNA abundance by binding to RNase E (Rne) and regulating its endonucleolytic activity. Can modulate Rne action in a substrate-dependent manner by altering the composition of the degradosome. This is Regulator of ribonuclease activity B from Aeromonas hydrophila subsp. hydrophila (strain ATCC 7966 / DSM 30187 / BCRC 13018 / CCUG 14551 / JCM 1027 / KCTC 2358 / NCIMB 9240 / NCTC 8049).